A 34-amino-acid chain; its full sequence is Photosystem II reaction center protein M (34 aa).

A helical membrane pass occupies residues 5-25 (ILAFIATALFVLIPTAFLIIL).

The protein belongs to the PsbM family. In terms of assembly, PSII is composed of 1 copy each of membrane proteins PsbA, PsbB, PsbC, PsbD, PsbE, PsbF, PsbH, PsbI, PsbJ, PsbK, PsbL, PsbM, PsbT, PsbX, PsbY, PsbZ, Psb30/Ycf12, at least 3 peripheral proteins of the oxygen-evolving complex and a large number of cofactors. It forms dimeric complexes.

It localises to the plastid. It is found in the chloroplast thylakoid membrane. One of the components of the core complex of photosystem II (PSII). PSII is a light-driven water:plastoquinone oxidoreductase that uses light energy to abstract electrons from H(2)O, generating O(2) and a proton gradient subsequently used for ATP formation. It consists of a core antenna complex that captures photons, and an electron transfer chain that converts photonic excitation into a charge separation. This subunit is found at the monomer-monomer interface. This is Photosystem II reaction center protein M from Zygnema circumcarinatum (Green alga).